The following is a 257-amino-acid chain: MKYDTILVDGYQRVGIITLNRPQALNALNSQMMNEITNAAKELDIDPDVGAILITGSPKVFAAGADIKEMASLTFTDAFDADFFSAWGKLAAVRTPMIAAVAGYALGGGCELAMMCDLLIAADTAKFGQPEIKLGVLPGMGGSQRLTRAIGKAKAMDLILTGRTIDAAEAERSGLVSRVVLADDLLPEAKAVATTISQMSRSATRMAKEAVNRSFESTLAEGLLHERRLFHSTFVTDDQSEGMAAFIEKRAPQFTHR.

This sequence belongs to the enoyl-CoA hydratase/isomerase family.

It catalyses the reaction a (3S)-3-hydroxyacyl-CoA = a (2E)-enoyl-CoA + H2O. The catalysed reaction is a 4-saturated-(3S)-3-hydroxyacyl-CoA = a (3E)-enoyl-CoA + H2O. Its function is as follows. Could possibly oxidize fatty acids using specific components. The chain is Probable enoyl-CoA hydratase echA8 (echA8) from Mycobacterium leprae (strain TN).